The following is a 520-amino-acid chain: Non-structural protein PNS7 (520 aa).

The chain is Non-structural protein PNS7 (S6) from Catharanthus roseus (Madagascar periwinkle).